Here is a 121-residue protein sequence, read N- to C-terminus: Large ribosomal subunit protein eL34B (121 aa).

It belongs to the eukaryotic ribosomal protein eL34 family. As to quaternary structure, component of the large ribosomal subunit (LSU). Mature yeast ribosomes consist of a small (40S) and a large (60S) subunit. The 40S small subunit contains 1 molecule of ribosomal RNA (18S rRNA) and 33 different proteins (encoded by 57 genes). The large 60S subunit contains 3 rRNA molecules (25S, 5.8S and 5S rRNA) and 46 different proteins (encoded by 81 genes).

It is found in the cytoplasm. Its function is as follows. Component of the ribosome, a large ribonucleoprotein complex responsible for the synthesis of proteins in the cell. The small ribosomal subunit (SSU) binds messenger RNAs (mRNAs) and translates the encoded message by selecting cognate aminoacyl-transfer RNA (tRNA) molecules. The large subunit (LSU) contains the ribosomal catalytic site termed the peptidyl transferase center (PTC), which catalyzes the formation of peptide bonds, thereby polymerizing the amino acids delivered by tRNAs into a polypeptide chain. The nascent polypeptides leave the ribosome through a tunnel in the LSU and interact with protein factors that function in enzymatic processing, targeting, and the membrane insertion of nascent chains at the exit of the ribosomal tunnel. This chain is Large ribosomal subunit protein eL34B, found in Saccharomyces cerevisiae (strain ATCC 204508 / S288c) (Baker's yeast).